The primary structure comprises 302 residues: D-alanine--D-alanine ligase (302 aa).

An ATP-grasp domain is found at 100-294 (KALFRREGLL…FPELVEKLIQ (195 aa)). 127–180 (GLNYPIFVKSNIGGSSVNVHLVTNYEELFIAMEALFNAGEEVLLEEAIIGQEVT) contacts ATP. 3 residues coordinate Mg(2+): Asp248, Glu261, and Asn263.

It belongs to the D-alanine--D-alanine ligase family. The cofactor is Mg(2+). Requires Mn(2+) as cofactor.

The protein resides in the cytoplasm. The catalysed reaction is 2 D-alanine + ATP = D-alanyl-D-alanine + ADP + phosphate + H(+). It participates in cell wall biogenesis; peptidoglycan biosynthesis. In terms of biological role, cell wall formation. The sequence is that of D-alanine--D-alanine ligase from Lawsonia intracellularis (strain PHE/MN1-00).